Here is a 514-residue protein sequence, read N- to C-terminus: Probable outer membrane protein pmp12 (514 aa).

The N-terminal stretch at 1–21 (MTILRNFLTCSALFLALPAAA) is a signal peptide.

This sequence belongs to the PMP outer membrane protein family.

It localises to the secreted. The protein resides in the cell wall. It is found in the cell outer membrane. The sequence is that of Probable outer membrane protein pmp12 (pmp12) from Chlamydia pneumoniae (Chlamydophila pneumoniae).